The following is a 311-amino-acid chain: Porphobilinogen deaminase (311 aa).

Cys245 carries the post-translational modification S-(dipyrrolylmethanemethyl)cysteine.

It belongs to the HMBS family. As to quaternary structure, monomer. Requires dipyrromethane as cofactor.

It catalyses the reaction 4 porphobilinogen + H2O = hydroxymethylbilane + 4 NH4(+). It functions in the pathway porphyrin-containing compound metabolism; protoporphyrin-IX biosynthesis; coproporphyrinogen-III from 5-aminolevulinate: step 2/4. Its function is as follows. Tetrapolymerization of the monopyrrole PBG into the hydroxymethylbilane pre-uroporphyrinogen in several discrete steps. This is Porphobilinogen deaminase from Acinetobacter baylyi (strain ATCC 33305 / BD413 / ADP1).